We begin with the raw amino-acid sequence, 140 residues long: Large ribosomal subunit protein uL11 (140 aa).

The protein belongs to the universal ribosomal protein uL11 family. As to quaternary structure, part of the ribosomal stalk of the 50S ribosomal subunit. Interacts with L10 and the large rRNA to form the base of the stalk. L10 forms an elongated spine to which L12 dimers bind in a sequential fashion forming a multimeric L10(L12)X complex. In terms of processing, one or more lysine residues are methylated.

Its function is as follows. Forms part of the ribosomal stalk which helps the ribosome interact with GTP-bound translation factors. This Halothermothrix orenii (strain H 168 / OCM 544 / DSM 9562) protein is Large ribosomal subunit protein uL11.